The chain runs to 234 residues: Ribosomal RNA large subunit methyltransferase E (234 aa).

Positions 1–37 are disordered; the sequence is MSDDDRRRWKGPGPERQDSGRRSTERKVIARNARTES. Residues Gly91, Trp93, Asp109, Asp125, and Asp149 each coordinate S-adenosyl-L-methionine. The active-site Proton acceptor is the Lys189.

This sequence belongs to the class I-like SAM-binding methyltransferase superfamily. RNA methyltransferase RlmE family.

It is found in the cytoplasm. The catalysed reaction is uridine(2552) in 23S rRNA + S-adenosyl-L-methionine = 2'-O-methyluridine(2552) in 23S rRNA + S-adenosyl-L-homocysteine + H(+). In terms of biological role, specifically methylates the uridine in position 2552 of 23S rRNA at the 2'-O position of the ribose in the fully assembled 50S ribosomal subunit. The chain is Ribosomal RNA large subunit methyltransferase E from Hyphomonas neptunium (strain ATCC 15444).